A 116-amino-acid polypeptide reads, in one-letter code: Beta-2-microglobulin (116 aa).

An N-terminal signal peptide occupies residues 1–19 (MKFLLSFVVLAVFSASAFA). The region spanning 24-111 (PKIQVYSRNP…RHLKETKNIS (88 aa)) is the Ig-like C1-type domain. A disulfide bond links Cys-44 and Cys-99.

Belongs to the beta-2-microglobulin family. Heterodimer of an alpha chain and a beta chain. Beta-2-microglobulin is the beta-chain of major histocompatibility complex class I molecules.

It localises to the secreted. In terms of biological role, component of the class I major histocompatibility complex (MHC). Involved in the presentation of peptide antigens to the immune system. The polypeptide is Beta-2-microglobulin (b2m) (Ictalurus punctatus (Channel catfish)).